The sequence spans 284 residues: MPTYALLGATGATGSAILRCLLASPPPDLDLNILVRSKQKLLKSFPTLTTTISPRIHIIQGNSTDTIALQQCLEDASVAFMCVADNASNKGVSLTADTVTAIVTTLGMLRKLHGSAYNAPTILQLRSASLNPKLSCQVPRLVYNIVSFCLHYSHLDIVKACEHYEAAAAKGLLSYIYVDPPTIHDAFGPNRTGHKLISCKPDVCDKQETALSYADLGAGFVEIASRKEDFLNQPVGVTATGKAKETWGVLAGFLFDGAKGRARAWWEEERPMSKPQNLFLYCGM.

The N-terminal stretch at 1-23 is a signal peptide; the sequence is MPTYALLGATGATGSAILRCLLA. N-linked (GlcNAc...) asparagine glycans are attached at residues Asn-62, Asn-86, and Asn-190.

It belongs to the avfA family.

Its pathway is mycotoxin biosynthesis. Functionally, averufin oxidase A; part of the fragmented gene cluster that mediates the biosynthesis of dothistromin (DOTH), a polyketide toxin very similar in structure to the aflatoxin precursor, versicolorin B. The first step of the pathway is the conversion of acetate to norsolorinic acid (NOR) and requires the fatty acid synthase subunits hexA and hexB, as well as the polyketide synthase pksA. PksA combines a hexanoyl starter unit and 7 malonyl-CoA extender units to synthesize the precursor NOR. The hexanoyl starter unit is provided to the acyl-carrier protein (ACP) domain by the fungal fatty acid synthase hexA/hexB. The second step is the conversion of NOR to averantin (AVN) and requires the norsolorinic acid ketoreductase nor1, which catalyzes the dehydration of norsolorinic acid to form (1'S)-averantin. The cytochrome P450 monooxygenase avnA then catalyzes the hydroxylation of AVN to 5'hydroxyaverantin (HAVN). The next step is performed by adhA that transforms HAVN to averufin (AVF). Averufin might then be converted to hydroxyversicolorone by cypX and avfA. Hydroxyversicolorone is further converted versiconal hemiacetal acetate (VHA) by moxY. VHA is then the substrate for the versiconal hemiacetal acetate esterase est1 to yield versiconal (VAL). Versicolorin B synthase vbsA then converts VAL to versicolorin B (VERB) by closing the bisfuran ring. Then, the activity of the versicolorin B desaturase verB leads to versicolorin A (VERA). DotB, a predicted chloroperoxidase, may perform epoxidation of the A-ring of VERA. Alternatively, a cytochrome P450, such as cypX or avnA could catalyze this step. It is also possible that another, uncharacterized, cytochrome P450 enzyme is responsible for this step. Opening of the epoxide could potentially be achieved by the epoxide hydrolase epoA. However, epoA seems not to be required for DOTH biosynthesis, but other epoxide hydrolases may have the ability to complement this hydrolysis. Alternatively, opening of the epoxide ring could be achieved non-enzymatically. The next step is the deoxygenation of ring A to yield the 5,8-dihydroxyanthraquinone which is most likely catalyzed by the NADPH dehydrogenase encoded by ver1. The last stages of DOTH biosynthesis are proposed to involve hydroxylation of the bisfuran. OrdB and norB might have oxidative roles here. An alternative possibility is that cytochrome P450 monoogenases such as avnA and cypX might perform these steps in addition to previously proposed steps. This Dothistroma septosporum (strain NZE10 / CBS 128990) (Red band needle blight fungus) protein is Averufin oxidase A.